We begin with the raw amino-acid sequence, 509 residues long: Bifunctional purine biosynthesis protein PurH (509 aa).

The region spanning 1-144 is the MGS-like domain; it reads MKRALISVSD…KNYAAVTVVV (144 aa).

The protein belongs to the PurH family.

The enzyme catalyses (6R)-10-formyltetrahydrofolate + 5-amino-1-(5-phospho-beta-D-ribosyl)imidazole-4-carboxamide = 5-formamido-1-(5-phospho-D-ribosyl)imidazole-4-carboxamide + (6S)-5,6,7,8-tetrahydrofolate. It carries out the reaction IMP + H2O = 5-formamido-1-(5-phospho-D-ribosyl)imidazole-4-carboxamide. It functions in the pathway purine metabolism; IMP biosynthesis via de novo pathway; 5-formamido-1-(5-phospho-D-ribosyl)imidazole-4-carboxamide from 5-amino-1-(5-phospho-D-ribosyl)imidazole-4-carboxamide (10-formyl THF route): step 1/1. It participates in purine metabolism; IMP biosynthesis via de novo pathway; IMP from 5-formamido-1-(5-phospho-D-ribosyl)imidazole-4-carboxamide: step 1/1. This Listeria monocytogenes serotype 4b (strain F2365) protein is Bifunctional purine biosynthesis protein PurH.